We begin with the raw amino-acid sequence, 70 residues long: Sec-independent protein translocase protein TatA (70 aa).

A helical membrane pass occupies residues 1–21; sequence MGSFSIWHWLIVLVVVLLIFG. The disordered stretch occupies residues 46–70; sequence DAPKISESDKGGHTIDAEVKDKQNS.

The protein belongs to the TatA/E family. In terms of assembly, the Tat system comprises two distinct complexes: a TatABC complex, containing multiple copies of TatA, TatB and TatC subunits, and a separate TatA complex, containing only TatA subunits. Substrates initially bind to the TatABC complex, which probably triggers association of the separate TatA complex to form the active translocon.

It localises to the cell inner membrane. Its function is as follows. Part of the twin-arginine translocation (Tat) system that transports large folded proteins containing a characteristic twin-arginine motif in their signal peptide across membranes. TatA could form the protein-conducting channel of the Tat system. The protein is Sec-independent protein translocase protein TatA of Thiobacillus denitrificans (strain ATCC 25259 / T1).